A 313-amino-acid polypeptide reads, in one-letter code: Isoaspartyl peptidase (313 aa).

T179 acts as the Nucleophile in catalysis. Substrate-binding positions include 207–210 and 230–233; these read RVGD and TGTG.

Belongs to the Ntn-hydrolase family. As to quaternary structure, heterotetramer of two alpha and two beta chains arranged as a dimer of alpha/beta heterodimers. Autocleaved. Generates the alpha and beta subunits. The beta subunit is thought to be responsible for the nucleophile hydrolase activity.

The catalysed reaction is Cleavage of a beta-linked Asp residue from the N-terminus of a polypeptide.. In terms of biological role, degrades proteins damaged by L-isoaspartyl residue formation (also known as beta-Asp residues). Degrades L-isoaspartyl-containing di- and tripeptides. Acts best on iso-Asp-Leu, followed by iso-Asp-Ala, -His and to a lesser extent iso-Asp-Lys, -Phe and iso-Asp-Leu-Ala. Does not act on internal iso-Asp bonds (Als-iso-Asp-Leu-Ala). Does not act on alpha-Asp bonds. Has poor L-asparaginase activity. In Salmonella typhimurium (strain LT2 / SGSC1412 / ATCC 700720), this protein is Isoaspartyl peptidase (iaaA).